Reading from the N-terminus, the 424-residue chain is Imidazolonepropionase (424 aa).

2 residues coordinate Fe(3+): His-85 and His-87. Residues His-85 and His-87 each coordinate Zn(2+). 3 residues coordinate 4-imidazolone-5-propanoate: Arg-94, Tyr-157, and His-190. N-formimidoyl-L-glutamate is bound at residue Tyr-157. His-255 serves as a coordination point for Fe(3+). A Zn(2+)-binding site is contributed by His-255. 4-imidazolone-5-propanoate is bound at residue Glu-258. Asp-329 lines the Fe(3+) pocket. Asp-329 provides a ligand contact to Zn(2+). The N-formimidoyl-L-glutamate site is built by Asn-331 and Gly-333. Ser-334 provides a ligand contact to 4-imidazolone-5-propanoate.

The protein belongs to the metallo-dependent hydrolases superfamily. HutI family. The cofactor is Zn(2+). Fe(3+) serves as cofactor.

It localises to the cytoplasm. It carries out the reaction 4-imidazolone-5-propanoate + H2O = N-formimidoyl-L-glutamate. It functions in the pathway amino-acid degradation; L-histidine degradation into L-glutamate; N-formimidoyl-L-glutamate from L-histidine: step 3/3. Catalyzes the hydrolytic cleavage of the carbon-nitrogen bond in imidazolone-5-propanoate to yield N-formimidoyl-L-glutamate. It is the third step in the universal histidine degradation pathway. This Brevibacillus brevis (strain 47 / JCM 6285 / NBRC 100599) protein is Imidazolonepropionase.